The primary structure comprises 161 residues: Nucleotide-binding protein lpg1167 (161 aa).

It belongs to the YajQ family.

Nucleotide-binding protein. The sequence is that of Nucleotide-binding protein lpg1167 from Legionella pneumophila subsp. pneumophila (strain Philadelphia 1 / ATCC 33152 / DSM 7513).